A 621-amino-acid chain; its full sequence is MYDVIVAGAGHAGTEAALAVSRSGLSCLLVTTDLNAVARMSCNPAIGGVAKGQITREIDALGGEMAKAIDSTGIQFRMLNLSKGPAMHSPRAQADRVAYTAYMKRALEEEVNLDLLQDTVTGIEQREGILRGVRLLSGRLVTGRAAILTCGTFLNGLIHIGMDHYPGGRTIAEPPVTGLTENLILAGFEAGRLKTGTPPRIDRRSVDYSRVEEQKGDENPPPFSFSTPTLKGRAQLSCYVTHSSERTHEILKTGFDRSPLFTGKVQGIGPRYCPSIEDKIFRFPDRPGHHIFLEPEGFETNEMYVNGFSTSLPEDIQIDGLRSMKGLEEVKLIRAGYAIEYDYFPPYQIHSTLETKRIRNLYFAGQINGTSGYEEAAAQGLLAGINAAADILKRPALRLKRSDAYIGVLVDDLVTKEMKEPYRMFTSSAEHRLMLRHDNADIRLMHFGHQSGLVSDAAMERCRTKMRAIGEIKALTEKTAIPAEVLDSLISKQGQPHAASGQKISAAIKRPGMSLEILMNSLPPFREALLSISTDKEAHQQVEIDLKYEGYLKRELLTADKIARLDALQIPSEYNYSCIKGLSSEGVEKLISHRPETLGQASRISGVSPSDISVLMVHIGR.

8 to 13 (GAGHAG) serves as a coordination point for FAD. The interval 199–227 (PRIDRRSVDYSRVEEQKGDENPPPFSFST) is disordered. Residues 200–218 (RIDRRSVDYSRVEEQKGDE) show a composition bias toward basic and acidic residues. 269–283 (GPRYCPSIEDKIFRF) serves as a coordination point for NAD(+).

Belongs to the MnmG family. In terms of assembly, homodimer. Heterotetramer of two MnmE and two MnmG subunits. Requires FAD as cofactor.

It is found in the cytoplasm. NAD-binding protein involved in the addition of a carboxymethylaminomethyl (cmnm) group at the wobble position (U34) of certain tRNAs, forming tRNA-cmnm(5)s(2)U34. This is tRNA uridine 5-carboxymethylaminomethyl modification enzyme MnmG from Chlorobium luteolum (strain DSM 273 / BCRC 81028 / 2530) (Pelodictyon luteolum).